We begin with the raw amino-acid sequence, 788 residues long: Integrin beta-6 (788 aa).

A signal peptide spans 1–21; the sequence is MGIELLCLFFLFLGRNDHVQG. One can recognise a PSI domain in the interval 22–71; the sequence is GCALGGAETCEDCLLIGPQCAWCAQENFTHPSGVGERCDTPANLLAKGCQ. The Extracellular portion of the chain corresponds to 22 to 709; that stretch reads GCALGGAETC…KDCPKPPNIP (688 aa). 19 disulfides stabilise this stretch: cysteine 23–cysteine 41, cysteine 31–cysteine 454, cysteine 34–cysteine 59, cysteine 44–cysteine 70, cysteine 197–cysteine 204, cysteine 252–cysteine 293, cysteine 394–cysteine 406, cysteine 426–cysteine 452, cysteine 456–cysteine 476, cysteine 467–cysteine 479, cysteine 481–cysteine 490, cysteine 492–cysteine 519, cysteine 502–cysteine 517, cysteine 511–cysteine 522, cysteine 524–cysteine 537, cysteine 539–cysteine 560, cysteine 544–cysteine 558, cysteine 552–cysteine 563, and cysteine 565–cysteine 574. N-linked (GlcNAc...) asparagine glycosylation is found at asparagine 48 and asparagine 97. In terms of domain architecture, VWFA spans 131-371; sequence YPVDLYYLMD…QLIISAYEEL (241 aa). Residues aspartate 140, serine 142, and serine 144 each contribute to the Mg(2+) site. Ca(2+)-binding residues include serine 144, aspartate 147, aspartate 148, and glutamate 179. The Ca(2+) site is built by asparagine 235, aspartate 237, proline 239, and glutamate 240. Glutamate 240 contacts Mg(2+). The N-linked (GlcNAc...) asparagine glycan is linked to asparagine 260. Ca(2+) contacts are provided by aspartate 271 and lysine 355. N-linked (GlcNAc...) asparagine glycans are attached at residues asparagine 387 and asparagine 396. I-EGF domains lie at 456 to 491, 492 to 538, 539 to 575, and 576 to 615; these read CQKE…PRCE, CGED…PYCQ, CDNF…EYCN, and CTTS…PTCE. Asparagine 463 and asparagine 471 each carry an N-linked (GlcNAc...) asparagine glycan. Asparagine 541 carries N-linked (GlcNAc...) asparagine glycosylation. N-linked (GlcNAc...) asparagine glycosylation occurs at asparagine 575. 9 disulfide bridges follow: cysteine 576–cysteine 599, cysteine 583–cysteine 597, cysteine 591–cysteine 602, cysteine 604–cysteine 614, cysteine 617–cysteine 620, cysteine 624–cysteine 670, cysteine 630–cysteine 649, cysteine 633–cysteine 645, and cysteine 678–cysteine 702. A helical membrane pass occupies residues 710–730; the sequence is MIMLGVSLAILLIGVVLLCIW. The tract at residues 731–758 is interaction with HAX1; it reads KLLVSFHDRKEVAKFEAERSKAKWQTGT. Over 731 to 788 the chain is Cytoplasmic; sequence KLLVSFHDRKEVAKFEAERSKAKWQTGTNPLYRGSTSTFKNVTYKHREKQKVDLSTDC.

Belongs to the integrin beta chain family. Heterodimer of an alpha and a beta subunit. Interacts with FLNB. Interacts with HAX1. ITGAV:ITGB6 interacts with FBN1. ITGAV:ITGB6 interacts with TGFB1. As to quaternary structure, (Microbial infection) Integrin ITGAV:ITGB6 interacts with coxsackievirus A9, coxsackievirus B1 capsid proteins. In terms of assembly, (Microbial infection) Integrin ITGAV:ITGB6 interacts with herpes simplex virus-1/HHV-1 gH:gL proteins.

The protein localises to the cell membrane. The protein resides in the cell junction. It is found in the focal adhesion. Functionally, integrin alpha-V:beta-6 (ITGAV:ITGB6) is a receptor for fibronectin and cytotactin. It recognizes the sequence R-G-D in its ligands. Internalization of integrin alpha-V/beta-6 via clathrin-mediated endocytosis promotes carcinoma cell invasion. ITGAV:ITGB6 acts as a receptor for fibrillin-1 (FBN1) and mediates R-G-D-dependent cell adhesion to FBN1. Integrin alpha-V:beta-6 (ITGAV:ITGB6) mediates R-G-D-dependent release of transforming growth factor beta-1 (TGF-beta-1) from regulatory Latency-associated peptide (LAP), thereby playing a key role in TGF-beta-1 activation. In terms of biological role, (Microbial infection) Integrin ITGAV:ITGB6 acts as a receptor for Coxsackievirus A9 and Coxsackievirus B1. (Microbial infection) Integrin ITGAV:ITGB6 acts as a receptor for Herpes simplex virus-1/HHV-1. The chain is Integrin beta-6 (ITGB6) from Homo sapiens (Human).